Consider the following 526-residue polypeptide: Keratin, type I cytoskeletal 10 (526 aa).

The span at 1–15 (MSVRYSSSKQYSSSR) shows a compositional bias: low complexity. The segment at 1–29 (MSVRYSSSKQYSSSRSGGGGGGGSSLRIS) is disordered. The tract at residues 1–126 (MSVRYSSSKQ…FGDGGLISGN (126 aa)) is head. Ser-14, Ser-16, Ser-34, Ser-45, Ser-48, and Ser-151 each carry phosphoserine. A coil 1A region spans residues 127-162 (QKITMQNLNDRLASYLDKVRALEESNYELEVKIKEW). Residues 127–441 (QKITMQNLND…SLLEGEGSSG (315 aa)) form the IF rod domain. The tract at residues 163–183 (YEKYGNSRQREPRDYSKYYQT) is linker 1. The coil 1B stretch occupies residues 184 to 275 (IDDLKNQIFN…KNHEEEMRDL (92 aa)). Positions 276 to 298 (QNVSTGDVNVEMNAAPGVDLTEL) are linker 12. The interval 299–437 (LNNMRSQYEQ…QTYRSLLEGE (139 aa)) is coil 2. A tail region spans residues 438 to 526 (GSSGGGSYGG…GESSSKGPRY (89 aa)). The segment covering 458-505 (GGGGYGGGSSSGGYGGGSSSGGGHGGSSGGSYGGGSSSGGGHGGGSSS) has biased composition (gly residues). Positions 458–526 (GGGGYGGGSS…GESSSKGPRY (69 aa)) are disordered. Over residues 506–526 (GGHKSTTTGSVGESSSKGPRY) the composition is skewed to low complexity.

The protein belongs to the intermediate filament family. Heterotetramer of two type I and two type II keratins. Heterodimer with KRT1. Two heterodimers of KRT1 and KRT10 form a heterotetramer. The KRT10 subunit in the heterotetramer is probably disulfide-linked.

The protein localises to the secreted. Its subcellular location is the extracellular space. It localises to the cell surface. The protein resides in the cytoplasm. Functionally, plays a role in the establishment of the epidermal barrier on plantar skin. Involved in the maintenance of cell layer development and keratin filament bundles in suprabasal cells of the epithelium. The protein is Keratin, type I cytoskeletal 10 (KRT10) of Bos taurus (Bovine).